The primary structure comprises 222 residues: SHAAEVTAGYYNLHDRDDYRPIARMLTRHHASLNFTCAEMRDSEQSSQAMSAPEELVQQVWSAGWREGLNIACENALPRYDPTAYNTILRNARPHGINHSSPTEHKLFGFTYLRLSNQLLEGQNYVNFKTFVDRMHANLPHDPSVDPVAPLQRSGPEIPIEVILQAAQPKLDPFPFEDHTDLPVQCLGGIGGGEVECPAGGIGGEVQQDPTGGMGGELPPAV.

Position 36 (T36) interacts with substrate. Catalysis depends on E74, which acts as the Proton acceptor. Substrate contacts are provided by residues 75–76 (NA) and R114.

The protein belongs to the glycosyl hydrolase 14 family.

It carries out the reaction Hydrolysis of (1-&gt;4)-alpha-D-glucosidic linkages in polysaccharides so as to remove successive maltose units from the non-reducing ends of the chains.. This is Beta-amylase (BMY1) from Secale cereale (Rye).